The sequence spans 275 residues: MRNTVSTFQELKDRGEKITMLTAYDYSMAKLIDSSGINGILVGDSLGMVCLGYENTLSVTMEDMIHHTKAVVRGTSNALVVGDMPFMSYQTSIYDAVYNAGRFIKEAGAHAVKLEGGATVAEEIKAIVKAQIPVMGHIGLTPQSVNMFGGFKVQGKNEKVAKKLIEDAKILEEAGAFSIVLECIPEKLSKIISESISIPTIGIGAGKYCDGQILVYQDMLSMFSDFKPKFVKSFGNIGESIKDGVSQYIKEVKESKFPEEKHAFKIDDDVINKLY.

Mg(2+) contacts are provided by aspartate 44 and aspartate 83. 3-methyl-2-oxobutanoate is bound by residues 44-45 (DS), aspartate 83, and lysine 113. Glutamate 115 provides a ligand contact to Mg(2+). Glutamate 182 (proton acceptor) is an active-site residue.

The protein belongs to the PanB family. In terms of assembly, homodecamer; pentamer of dimers. It depends on Mg(2+) as a cofactor.

The protein localises to the cytoplasm. It carries out the reaction 3-methyl-2-oxobutanoate + (6R)-5,10-methylene-5,6,7,8-tetrahydrofolate + H2O = 2-dehydropantoate + (6S)-5,6,7,8-tetrahydrofolate. Its pathway is cofactor biosynthesis; (R)-pantothenate biosynthesis; (R)-pantoate from 3-methyl-2-oxobutanoate: step 1/2. In terms of biological role, catalyzes the reversible reaction in which hydroxymethyl group from 5,10-methylenetetrahydrofolate is transferred onto alpha-ketoisovalerate to form ketopantoate. The protein is 3-methyl-2-oxobutanoate hydroxymethyltransferase of Clostridium botulinum (strain 657 / Type Ba4).